Reading from the N-terminus, the 70-residue chain is ATP synthase subunit c (70 aa).

2 helical membrane passes run 3–23 and 47–67; these read FIAA…GNGM and FIGV…AFML.

Belongs to the ATPase C chain family. In terms of assembly, F-type ATPases have 2 components, F(1) - the catalytic core - and F(0) - the membrane proton channel. F(1) has five subunits: alpha(3), beta(3), gamma(1), delta(1), epsilon(1). F(0) has three main subunits: a(1), b(2) and c(10-14). The alpha and beta chains form an alternating ring which encloses part of the gamma chain. F(1) is attached to F(0) by a central stalk formed by the gamma and epsilon chains, while a peripheral stalk is formed by the delta and b chains.

Its subcellular location is the cell membrane. Its function is as follows. F(1)F(0) ATP synthase produces ATP from ADP in the presence of a proton or sodium gradient. F-type ATPases consist of two structural domains, F(1) containing the extramembraneous catalytic core and F(0) containing the membrane proton channel, linked together by a central stalk and a peripheral stalk. During catalysis, ATP synthesis in the catalytic domain of F(1) is coupled via a rotary mechanism of the central stalk subunits to proton translocation. In terms of biological role, key component of the F(0) channel; it plays a direct role in translocation across the membrane. A homomeric c-ring of between 10-14 subunits forms the central stalk rotor element with the F(1) delta and epsilon subunits. This Lacticaseibacillus casei (strain BL23) (Lactobacillus casei) protein is ATP synthase subunit c.